The chain runs to 531 residues: Zinc finger CCCH-type with G patch domain-containing protein (531 aa).

Met-1 is subject to N-acetylmethionine. Positions 91 to 133 are disordered; that stretch reads EAPAAARGSGSETVPKAEAGPESAAGGQEEEEGEDEEELSGTK. Residues 107 to 117 show a composition bias toward low complexity; the sequence is AEAGPESAAGG. Positions 118–129 are enriched in acidic residues; that stretch reads QEEEEGEDEEEL. The segment at 175–201 adopts a C3H1-type zinc-finger fold; it reads KSLKPCPFFLEGKCRFKENCRFSHGQV. A disordered region spans residues 267–289; the sequence is PPLRTEATESDSDSDGTGDSSYA. The G-patch domain occupies 333 to 379; sequence TRGIGSRLLTKMGYEFGKGLGRHAEGRVEPIHAVVLPRGKSLDQCVE. Ser-373 carries the phosphoserine modification. 3 disordered regions span residues 385 to 409, 426 to 446, and 509 to 531; these read TRVG…GGRP, APGA…DMYH, and RAQE…MTEF. Over residues 426-438 the composition is skewed to low complexity; the sequence is APGALEAGAAPAG. The segment covering 518 to 531 has biased composition (basic and acidic residues); sequence EQRKADTHKKMTEF.

Interacts with CHD4/Mi-2; the interaction is direct. In terms of processing, ubiquitinated in case of infection by HIV-1, leading to its degradation. Ubiquitination is mediated by the CUL4A-RBX1-DDB1-DCAF1/VPRBP complex that is hijacked by HIV-1 via interaction between HIV-1 Vpr and DCAF1/VPRBP. As to expression, widely expressed.

It localises to the nucleus. In terms of biological role, transcription repressor that specifically binds the 5'-GGAG[GA]A[GA]A-3' consensus sequence. Represses transcription by recruiting the chromatin multiprotein complex NuRD to target promoters. Negatively regulates expression of EGFR, a gene involved in cell proliferation, survival and migration. Its ability to repress genes of the EGFR pathway suggest it may act as a tumor suppressor. Able to suppress breast carcinogenesis. Antagonizes the transcription repression by isoform 1 by competing for the binding of the NuRD complex. Does not bind DNA. This is Zinc finger CCCH-type with G patch domain-containing protein (ZGPAT) from Homo sapiens (Human).